The sequence spans 181 residues: CAPA peptides (181 aa).

The N-terminal stretch at methionine 1–glycine 22 is a signal peptide. Positions glutamine 23 to aspartate 29 are excised as a propeptide. Isoleucine 41 is subject to Isoleucine amide. Residues asparagine 44–glutamate 54 constitute a propeptide that is removed on maturation. An Isoleucine amide modification is found at isoleucine 65. A propeptide spanning residues serine 68–leucine 181 is cleaved from the precursor. Positions threonine 159–leucine 181 are disordered. The span at leucine 169 to leucine 181 shows a compositional bias: basic and acidic residues.

In terms of processing, a pyrokinin potentially constituted by residues Asn-158 to Gly-170 has so far not been detected and might be completely absent in ants. In terms of tissue distribution, periviscerokinin 1 and 2 are expressed in central brain, antennal lobes and gnathal, thoracic and abominal ganglia. Periviscerokinin 2 is also expressed in the retrocerebral complex (at protein level).

It localises to the secreted. Periviscerokinins mediate visceral muscle contractile activity (myotropic activity). The sequence is that of CAPA peptides from Camponotus floridanus (Florida carpenter ant).